Here is a 250-residue protein sequence, read N- to C-terminus: tRNA (guanine-N(1)-)-methyltransferase (250 aa).

S-adenosyl-L-methionine-binding positions include Gly-113 and 133-138; that span reads IGDYVL.

This sequence belongs to the RNA methyltransferase TrmD family. As to quaternary structure, homodimer.

Its subcellular location is the cytoplasm. The enzyme catalyses guanosine(37) in tRNA + S-adenosyl-L-methionine = N(1)-methylguanosine(37) in tRNA + S-adenosyl-L-homocysteine + H(+). Functionally, specifically methylates guanosine-37 in various tRNAs. This Shewanella amazonensis (strain ATCC BAA-1098 / SB2B) protein is tRNA (guanine-N(1)-)-methyltransferase.